The chain runs to 232 residues: 2,3,4,5-tetrahydropyridine-2,6-dicarboxylate N-acetyltransferase (232 aa).

It belongs to the transferase hexapeptide repeat family. DapH subfamily.

The catalysed reaction is (S)-2,3,4,5-tetrahydrodipicolinate + acetyl-CoA + H2O = L-2-acetamido-6-oxoheptanedioate + CoA. It functions in the pathway amino-acid biosynthesis; L-lysine biosynthesis via DAP pathway; LL-2,6-diaminopimelate from (S)-tetrahydrodipicolinate (acetylase route): step 1/3. Functionally, catalyzes the transfer of an acetyl group from acetyl-CoA to tetrahydrodipicolinate. The sequence is that of 2,3,4,5-tetrahydropyridine-2,6-dicarboxylate N-acetyltransferase from Streptococcus uberis (strain ATCC BAA-854 / 0140J).